A 306-amino-acid polypeptide reads, in one-letter code: Acetyl-coenzyme A carboxylase carboxyl transferase subunit beta (306 aa).

Residues 27-296 (LWHKCPSCEA…PRFVAPVIEP (270 aa)) form the CoA carboxyltransferase N-terminal domain. Residues cysteine 31, cysteine 34, cysteine 50, and cysteine 53 each contribute to the Zn(2+) site. The C4-type zinc-finger motif lies at 31-53 (CPSCEAVLYRPELEKTLDVCPKC).

Belongs to the AccD/PCCB family. In terms of assembly, acetyl-CoA carboxylase is a heterohexamer composed of biotin carboxyl carrier protein (AccB), biotin carboxylase (AccC) and two subunits each of ACCase subunit alpha (AccA) and ACCase subunit beta (AccD). Zn(2+) is required as a cofactor.

The protein resides in the cytoplasm. It carries out the reaction N(6)-carboxybiotinyl-L-lysyl-[protein] + acetyl-CoA = N(6)-biotinyl-L-lysyl-[protein] + malonyl-CoA. The protein operates within lipid metabolism; malonyl-CoA biosynthesis; malonyl-CoA from acetyl-CoA: step 1/1. Its function is as follows. Component of the acetyl coenzyme A carboxylase (ACC) complex. Biotin carboxylase (BC) catalyzes the carboxylation of biotin on its carrier protein (BCCP) and then the CO(2) group is transferred by the transcarboxylase to acetyl-CoA to form malonyl-CoA. This chain is Acetyl-coenzyme A carboxylase carboxyl transferase subunit beta, found in Pseudomonas syringae pv. syringae (strain B728a).